A 325-amino-acid chain; its full sequence is GMP reductase (325 aa).

Residue Cys-173 is the Thioimidate intermediate of the active site. Position 202 to 225 (202 to 225 (IIADGGIRSHGDIAKSVRFGATMV)) interacts with NADP(+).

It belongs to the IMPDH/GMPR family. GuaC type 2 subfamily.

It carries out the reaction IMP + NH4(+) + NADP(+) = GMP + NADPH + 2 H(+). Functionally, catalyzes the irreversible NADPH-dependent deamination of GMP to IMP. It functions in the conversion of nucleobase, nucleoside and nucleotide derivatives of G to A nucleotides, and in maintaining the intracellular balance of A and G nucleotides. This chain is GMP reductase, found in Delftia acidovorans (strain DSM 14801 / SPH-1).